A 122-amino-acid chain; its full sequence is Large ribosomal subunit protein uL14 (122 aa).

This sequence belongs to the universal ribosomal protein uL14 family. In terms of assembly, part of the 50S ribosomal subunit. Forms a cluster with proteins L3 and L19. In the 70S ribosome, L14 and L19 interact and together make contacts with the 16S rRNA in bridges B5 and B8.

Its function is as follows. Binds to 23S rRNA. Forms part of two intersubunit bridges in the 70S ribosome. This chain is Large ribosomal subunit protein uL14, found in Carsonella ruddii (strain PV).